The following is a 467-amino-acid chain: Cytochrome P450 85A3 (467 aa).

The helical transmembrane segment at 2–22 threads the bilayer; that stretch reads AIFLIIFVVFFGFCILSTPLF. Cys417 is a binding site for heme.

Belongs to the cytochrome P450 family. It depends on heme as a cofactor. As to expression, expressed in fruits.

It localises to the membrane. The enzyme catalyses 6-deoxocastasterone + reduced [NADPH--hemoprotein reductase] + O2 = 6alpha-hydroxycastasterone + oxidized [NADPH--hemoprotein reductase] + H2O + H(+). It carries out the reaction 6alpha-hydroxycastasterone + reduced [NADPH--hemoprotein reductase] + O2 = castasterone + oxidized [NADPH--hemoprotein reductase] + 2 H2O + H(+). The catalysed reaction is castasterone + reduced [NADPH--hemoprotein reductase] + O2 = brassinolide + oxidized [NADPH--hemoprotein reductase] + H2O + H(+). It catalyses the reaction 6-deoxocastasterone + 2 reduced [NADPH--hemoprotein reductase] + 2 O2 = castasterone + 2 oxidized [NADPH--hemoprotein reductase] + 3 H2O + 2 H(+). It participates in plant hormone biosynthesis; brassinosteroid biosynthesis. Functionally, catalyzes the C6-oxidation step in brassinosteroids biosynthesis. Converts 6-deoxocastasterone (6-deoxoCS) to castasterone (CS), and castasterone (CS) to brassinolide (BL). The protein is Cytochrome P450 85A3 of Solanum lycopersicum (Tomato).